The sequence spans 237 residues: MSSTAPWDQLTWQPSSDQLQQFNRLQELLREWNGKVNLTRLVEGEDYWISQIFDSLWPLQPWLSKGEPLKVIDVGTGGGFPGLAIAIALPQAQLTLVDSVGRKVQAVQAMADALGLTERVQLRCERAEKTGRDPHCRRQFQLAVARAVAAAPVVAEYLVPLLSADGTALLYRGQWSDEDQRQLQRAAAQLNSSTETIQVQELPAERGLRHVIPLRPQGVCPKQYPRAVGVPAKLPLA.

Residues G75, F80, 127–128 (AE), and R146 contribute to the S-adenosyl-L-methionine site.

It belongs to the methyltransferase superfamily. RNA methyltransferase RsmG family.

The protein resides in the cytoplasm. Specifically methylates the N7 position of a guanine in 16S rRNA. The chain is Ribosomal RNA small subunit methyltransferase G from Synechococcus sp. (strain RCC307).